Consider the following 246-residue polypeptide: Endonuclease NucS (246 aa).

It belongs to the NucS endonuclease family.

It localises to the cytoplasm. Cleaves both 3' and 5' ssDNA extremities of branched DNA structures. In Corynebacterium urealyticum (strain ATCC 43042 / DSM 7109), this protein is Endonuclease NucS.